The following is a 1295-amino-acid chain: Phosphoribosylformylglycinamidine synthase (1295 aa).

Residues 305–327 (WPGAATGSGGEIRDEGATGRGAK) form a disordered region. Residues 307 to 318 (GAATGSGGEIRD) and Ala-678 contribute to the ATP site. Mg(2+) contacts are provided by Glu-718, Asn-722, and Asp-884. An ATP-binding site is contributed by Ser-886. A Glutamine amidotransferase type-1 domain is found at 1042 to 1295 (VAVLREQGVN…IFRNARKQLG (254 aa)). Cys-1135 acts as the Nucleophile in catalysis. Catalysis depends on residues His-1260 and Glu-1262.

This sequence in the N-terminal section; belongs to the FGAMS family. Monomer. In terms of processing, both N-terminus methionine truncation and retention have been observed for this protein.

The protein resides in the cytoplasm. It catalyses the reaction N(2)-formyl-N(1)-(5-phospho-beta-D-ribosyl)glycinamide + L-glutamine + ATP + H2O = 2-formamido-N(1)-(5-O-phospho-beta-D-ribosyl)acetamidine + L-glutamate + ADP + phosphate + H(+). Its pathway is purine metabolism; IMP biosynthesis via de novo pathway; 5-amino-1-(5-phospho-D-ribosyl)imidazole from N(2)-formyl-N(1)-(5-phospho-D-ribosyl)glycinamide: step 1/2. In terms of biological role, phosphoribosylformylglycinamidine synthase involved in the purines biosynthetic pathway. Catalyzes the ATP-dependent conversion of formylglycinamide ribonucleotide (FGAR) and glutamine to yield formylglycinamidine ribonucleotide (FGAM) and glutamate. This Escherichia coli (strain K12) protein is Phosphoribosylformylglycinamidine synthase.